A 92-amino-acid polypeptide reads, in one-letter code: Small ribosomal subunit protein uS19 (92 aa).

Belongs to the universal ribosomal protein uS19 family.

Protein S19 forms a complex with S13 that binds strongly to the 16S ribosomal RNA. The polypeptide is Small ribosomal subunit protein uS19 (Borrelia duttonii (strain Ly)).